We begin with the raw amino-acid sequence, 604 residues long: UvrABC system protein C (604 aa).

In terms of domain architecture, GIY-YIG spans 17–95 (AQPGVYRMLN…IKSLAPRYNI (79 aa)). In terms of domain architecture, UVR spans 204–239 (DEVLKTIEQKMFTASDQQDYEQAAQLRDQMQALRKI).

It belongs to the UvrC family. As to quaternary structure, interacts with UvrB in an incision complex.

It localises to the cytoplasm. The UvrABC repair system catalyzes the recognition and processing of DNA lesions. UvrC both incises the 5' and 3' sides of the lesion. The N-terminal half is responsible for the 3' incision and the C-terminal half is responsible for the 5' incision. The polypeptide is UvrABC system protein C (Nitrosomonas europaea (strain ATCC 19718 / CIP 103999 / KCTC 2705 / NBRC 14298)).